The sequence spans 456 residues: Chromosomal replication initiator protein DnaA (456 aa).

A domain I, interacts with DnaA modulators region spans residues M1–Y73. The tract at residues Y73–A117 is domain II. Positions N118–I334 are domain III, AAA+ region. Residues G162, G164, K165, and T166 each contribute to the ATP site. The segment at S335–H456 is domain IV, binds dsDNA.

This sequence belongs to the DnaA family. In terms of assembly, oligomerizes as a right-handed, spiral filament on DNA at oriC.

The protein resides in the cytoplasm. Its function is as follows. Plays an essential role in the initiation and regulation of chromosomal replication. ATP-DnaA binds to the origin of replication (oriC) to initiate formation of the DNA replication initiation complex once per cell cycle. Binds the DnaA box (a 9 base pair repeat at the origin) and separates the double-stranded (ds)DNA. Forms a right-handed helical filament on oriC DNA; dsDNA binds to the exterior of the filament while single-stranded (ss)DNA is stabiized in the filament's interior. The ATP-DnaA-oriC complex binds and stabilizes one strand of the AT-rich DNA unwinding element (DUE), permitting loading of DNA polymerase. After initiation quickly degrades to an ADP-DnaA complex that is not apt for DNA replication. Binds acidic phospholipids. The protein is Chromosomal replication initiator protein DnaA of Trichodesmium erythraeum (strain IMS101).